The chain runs to 612 residues: Lysophospholipase (612 aa).

An N-terminal signal peptide occupies residues 1 to 9 (DITFAGVQR). A PLA2c domain is found at 24-571 (SCPASRPTVR…DRYCWNGTVN (548 aa)). N-linked (GlcNAc...) asparagine glycans are attached at residues asparagine 41, asparagine 81, asparagine 116, asparagine 150, asparagine 223, asparagine 267, asparagine 306, asparagine 335, asparagine 427, asparagine 440, asparagine 446, asparagine 477, asparagine 498, asparagine 526, asparagine 532, asparagine 567, and asparagine 571.

The protein belongs to the lysophospholipase family. Post-translationally, N-glycosylated.

Its subcellular location is the secreted. The enzyme catalyses a 1-acyl-sn-glycero-3-phosphocholine + H2O = sn-glycerol 3-phosphocholine + a fatty acid + H(+). Functionally, catalyzes the release of fatty acids from lysophospholipids. This is Lysophospholipase from Penicillium chrysogenum (Penicillium notatum).